A 266-amino-acid polypeptide reads, in one-letter code: Segregation and condensation protein A (266 aa).

The protein belongs to the ScpA family. In terms of assembly, component of a cohesin-like complex composed of ScpA, ScpB and the Smc homodimer, in which ScpA and ScpB bind to the head domain of Smc. The presence of the three proteins is required for the association of the complex with DNA.

Its subcellular location is the cytoplasm. Functionally, participates in chromosomal partition during cell division. May act via the formation of a condensin-like complex containing Smc and ScpB that pull DNA away from mid-cell into both cell halves. The sequence is that of Segregation and condensation protein A from Coxiella burnetii (strain RSA 493 / Nine Mile phase I).